The following is a 401-amino-acid chain: Tyrosine--tRNA ligase (401 aa).

The short motif at 45-54 (PTAPDLHLGH) is the 'HIGH' region element. The 'KMSKS' region motif lies at 230-234 (KMSKS). Lys-233 contributes to the ATP binding site. In terms of domain architecture, S4 RNA-binding spans 339 to 399 (IWLAKALVEC…GKRKFAKLKV (61 aa)).

This sequence belongs to the class-I aminoacyl-tRNA synthetase family. TyrS type 2 subfamily. Homodimer.

It is found in the cytoplasm. It catalyses the reaction tRNA(Tyr) + L-tyrosine + ATP = L-tyrosyl-tRNA(Tyr) + AMP + diphosphate + H(+). Catalyzes the attachment of tyrosine to tRNA(Tyr) in a two-step reaction: tyrosine is first activated by ATP to form Tyr-AMP and then transferred to the acceptor end of tRNA(Tyr). This is Tyrosine--tRNA ligase from Campylobacter jejuni (strain RM1221).